Here is a 619-residue protein sequence, read N- to C-terminus: Chitinase C (619 aa).

The first 30 residues, 1 to 30 (MRFRHKAAALAATLALPLAGLVGLASPAQA), serve as a signal peptide directing secretion. The CBM2 domain occupies 31 to 134 (ATSATATFAK…KLNGGSCDGT (104 aa)). The Fibronectin type-III domain maps to 144–229 (APGTPTASNI…GAVKVTTTGG (86 aa)). Residues 212–236 (ADQTGPASGAVKVTTTGGGDGGNPG) form a disordered region. Residues 227–236 (TGGGDGGNPG) are compositionally biased toward gly residues. The region spanning 240–619 (EVKMGYFTNW…TPAVRTTRRH (380 aa)) is the GH18 domain. Chitin-binding positions include 312 to 313 (DQ) and 339 to 342 (GGWT). Glu382 functions as the Proton donor in the catalytic mechanism. Chitin contacts are provided by residues Tyr383, 449 to 452 (MTYD), and Trp589.

This sequence belongs to the glycosyl hydrolase 18 family. Chitinase class II subfamily.

The enzyme catalyses Random endo-hydrolysis of N-acetyl-beta-D-glucosaminide (1-&gt;4)-beta-linkages in chitin and chitodextrins.. The protein is Chitinase C (chiC) of Streptomyces lividans.